A 312-amino-acid polypeptide reads, in one-letter code: Pectinesterase inhibitor 10 (312 aa).

The signal sequence occupies residues 1-25 (MNILSQTQILHLSIAILLFITTSSS). Low complexity-rich tracts occupy residues 24–36 (SSSLSPSSSSPSL) and 44–55 (SPSSAPPSSLSP). Residues 24–141 (SSSLSPSSSS…PSSSSSTYSN (118 aa)) are disordered. Residues 56 to 75 (SSPPPLSLSPSSPPPPPPSS) show a composition bias toward pro residues. Composition is skewed to low complexity over residues 76–85 (SPLSSLSPSL) and 93–104 (SPSSAPPSSLSP). The span at 105–124 (SSPPPLSLSPSSPPPPPPSS) shows a compositional bias: pro residues. The segment covering 125–137 (SPLSSLSPSSSSS) has biased composition (low complexity). N-linked (GlcNAc...) asparagine glycans are attached at residues asparagine 141, asparagine 153, asparagine 185, and asparagine 200. Cysteine 152 and cysteine 161 are disulfide-bonded. Cysteine 218 and cysteine 268 form a disulfide bridge.

It belongs to the PMEI family.

The protein localises to the secreted. It localises to the extracellular space. Its subcellular location is the apoplast. Functionally, pectin methylesterase (PME) inhibitor involved in the maintenance of cell wall integrity in response to necrotrophic pathogens. Modulates PME activity and pectin methylesterification during infection by Botrytis cinerea and contributes to resistance against the pathogen. This is Pectinesterase inhibitor 10 from Arabidopsis thaliana (Mouse-ear cress).